The primary structure comprises 306 residues: Probable 2-dehydro-3-deoxygalactonokinase DgoK1 (306 aa).

This sequence belongs to the DgoK family.

It carries out the reaction 2-dehydro-3-deoxy-D-galactonate + ATP = 2-dehydro-3-deoxy-6-phospho-D-galactonate + ADP + H(+). The protein operates within carbohydrate acid metabolism; D-galactonate degradation; D-glyceraldehyde 3-phosphate and pyruvate from D-galactonate: step 2/3. Involved in the degradation of galactose via the DeLey-Doudoroff pathway. This is Probable 2-dehydro-3-deoxygalactonokinase DgoK1 (dgoK1) from Rhizobium meliloti (strain 1021) (Ensifer meliloti).